A 445-amino-acid chain; its full sequence is Rab GDP dissociation inhibitor beta (445 aa).

Methionine 1 bears the N-acetylmethionine mark. Lysine 57 carries the N6-succinyllysine modification. Lysine 112 is modified (N6-acetyllysine). Serine 130 is subject to Phosphoserine. Lysine 269 bears the N6-acetyllysine mark. Serine 382 bears the Phosphoserine mark.

It belongs to the Rab GDI family. Interacts with RHOH. Interacts with the GDP-bound inactive forms of RAB3A, RAB3B, RAB3C, RAB5A, RAB5B, RAB5C, RAB8A, RAB8B, RAB10, RAB12, RAB35, and RAB43; binds RAB3D to a lesser extent. Interacts with DZIP1; this interaction negatively regulates the interaction of GDI2 with GDP-bound RAB8A. In terms of tissue distribution, ubiquitously expressed.

It is found in the cytoplasm. Its subcellular location is the membrane. The protein localises to the golgi apparatus. It localises to the trans-Golgi network. In terms of biological role, GDP-dissociation inhibitor preventing the GDP to GTP exchange of most Rab proteins. By keeping these small GTPases in their inactive GDP-bound form regulates intracellular membrane trafficking. Negatively regulates protein transport to the cilium and ciliogenesis through the inhibition of RAB8A. This is Rab GDP dissociation inhibitor beta (Gdi2) from Rattus norvegicus (Rat).